The following is a 110-amino-acid chain: Phosphoribosyl-ATP pyrophosphatase (110 aa).

It belongs to the PRA-PH family.

The protein localises to the cytoplasm. It catalyses the reaction 1-(5-phospho-beta-D-ribosyl)-ATP + H2O = 1-(5-phospho-beta-D-ribosyl)-5'-AMP + diphosphate + H(+). It functions in the pathway amino-acid biosynthesis; L-histidine biosynthesis; L-histidine from 5-phospho-alpha-D-ribose 1-diphosphate: step 2/9. This is Phosphoribosyl-ATP pyrophosphatase (hisE) from Clostridium acetobutylicum (strain ATCC 824 / DSM 792 / JCM 1419 / IAM 19013 / LMG 5710 / NBRC 13948 / NRRL B-527 / VKM B-1787 / 2291 / W).